Here is a 202-residue protein sequence, read N- to C-terminus: NNYCKIKCRSGIHTLCKFGISTKPNCGKNVVKASGLTKAEKLEILKQHNEFRQKVARGLETRGKPGPQPPAKSMNTLVWNDELAQIAQVWAGQCDYGHDVCRNTAKYSVGQNIAENGSTAASFASVSNMVQMWADEVKNYQYGSTKNKLIEVGHYTQMVWAKTKEIGCGSIKYIENGWHRHYLVCNYGPAGNIGNEPIYERK.

Intrachain disulfides connect cysteine 4-cysteine 16, cysteine 8-cysteine 101, cysteine 26-cysteine 94, and cysteine 168-cysteine 185. The SCP domain occupies 46 to 187 (KQHNEFRQKV…WHRHYLVCNY (142 aa)).

It belongs to the CRISP family. Venom allergen 5-like subfamily. Expressed by the venom gland.

It is found in the secreted. In Vespa mandarinia (Asian giant hornet), this protein is Venom allergen 5.